Consider the following 515-residue polypeptide: 1-pyrroline-5-carboxylate dehydrogenase (515 aa).

Catalysis depends on residues E286 and C320.

This sequence belongs to the aldehyde dehydrogenase family. RocA subfamily.

The catalysed reaction is L-glutamate 5-semialdehyde + NAD(+) + H2O = L-glutamate + NADH + 2 H(+). The protein operates within amino-acid degradation; L-proline degradation into L-glutamate; L-glutamate from L-proline: step 2/2. The polypeptide is 1-pyrroline-5-carboxylate dehydrogenase (Bacillus mycoides (strain KBAB4) (Bacillus weihenstephanensis)).